A 38-amino-acid polypeptide reads, in one-letter code: QQCAERGQSCNPYEGIECCGDILCIQPRIWPPVPGRCA.

Glutamine 1 carries the post-translational modification Pyrrolidone carboxylic acid.

In terms of processing, contains disulfide bonds.

Its function is as follows. Inhibits trypsin-like proteases from the guts of the insect pests P.truncatus, P.americana, Acheta sp and Gryllus sp. The protein is Trypsin inhibitor 2 of Opuntia streptacantha (Prickly pear cactus).